The chain runs to 517 residues: Cytochrome P450 1A1 (517 aa).

The interval 34–45 (WQPRVPKGLKSP) is mitochondrial targeting signal. An O-linked (GlcNAc) serine glycan is attached at serine 72. Phenylalanine 229 serves as a coordination point for substrate. Cysteine 462 serves as a coordination point for heme.

This sequence belongs to the cytochrome P450 family. Interacts with cytosolic chaperones HSP70 and HSP90; this interaction is required for initial targeting to mitochondria. Interacts (via mitochondrial targeting signal) with TOMM40 (via N-terminus); this interaction is required for translocation across the mitochondrial outer membrane. It depends on heme as a cofactor.

It is found in the endoplasmic reticulum membrane. It localises to the mitochondrion inner membrane. The protein resides in the microsome membrane. The protein localises to the cytoplasm. It carries out the reaction an organic molecule + reduced [NADPH--hemoprotein reductase] + O2 = an alcohol + oxidized [NADPH--hemoprotein reductase] + H2O + H(+). The enzyme catalyses estrone + reduced [NADPH--hemoprotein reductase] + O2 = 2-hydroxyestrone + oxidized [NADPH--hemoprotein reductase] + H2O + H(+). It catalyses the reaction estrone + reduced [NADPH--hemoprotein reductase] + O2 = 4-hydroxyestrone + oxidized [NADPH--hemoprotein reductase] + H2O + H(+). The catalysed reaction is estrone + reduced [NADPH--hemoprotein reductase] + O2 = 6alpha-hydroxyestrone + oxidized [NADPH--hemoprotein reductase] + H2O + H(+). It carries out the reaction estrone + reduced [NADPH--hemoprotein reductase] + O2 = 15alpha-hydroxyestrone + oxidized [NADPH--hemoprotein reductase] + H2O + H(+). The enzyme catalyses estrone + reduced [NADPH--hemoprotein reductase] + O2 = 16alpha-hydroxyestrone + oxidized [NADPH--hemoprotein reductase] + H2O + H(+). It catalyses the reaction 17beta-estradiol + reduced [NADPH--hemoprotein reductase] + O2 = 2-hydroxy-17beta-estradiol + oxidized [NADPH--hemoprotein reductase] + H2O + H(+). The catalysed reaction is 17beta-estradiol + reduced [NADPH--hemoprotein reductase] + O2 = 4-hydroxy-17beta-estradiol + oxidized [NADPH--hemoprotein reductase] + H2O + H(+). It carries out the reaction 17beta-estradiol + reduced [NADPH--hemoprotein reductase] + O2 = 6alpha-hydroxy-17beta-estradiol + oxidized [NADPH--hemoprotein reductase] + H2O + H(+). The enzyme catalyses 17beta-estradiol + reduced [NADPH--hemoprotein reductase] + O2 = 7alpha-hydroxy-17beta-estradiol + oxidized [NADPH--hemoprotein reductase] + H2O + H(+). It catalyses the reaction 17beta-estradiol + reduced [NADPH--hemoprotein reductase] + O2 = 15alpha-hydroxy-17beta-estradiol + oxidized [NADPH--hemoprotein reductase] + H2O + H(+). The catalysed reaction is (5Z,8Z,11Z)-eicosatrienoate + reduced [NADPH--hemoprotein reductase] + O2 = 19-hydroxy-(5Z,8Z,11Z)-eicosatrienoate + oxidized [NADPH--hemoprotein reductase] + H2O + H(+). It carries out the reaction (5Z,8Z,11Z,14Z)-eicosatetraenoate + reduced [NADPH--hemoprotein reductase] + O2 = 16-hydroxy-(5Z,8Z,11Z,14Z)-eicosatetraenoate + oxidized [NADPH--hemoprotein reductase] + H2O + H(+). The enzyme catalyses (5Z,8Z,11Z,14Z)-eicosatetraenoate + reduced [NADPH--hemoprotein reductase] + O2 = 17-hydroxy-(5Z,8Z,11Z,14Z)-eicosatetraenoate + oxidized [NADPH--hemoprotein reductase] + H2O + H(+). It catalyses the reaction (5Z,8Z,11Z,14Z)-eicosatetraenoate + reduced [NADPH--hemoprotein reductase] + O2 = 18-hydroxy-(5Z,8Z,11Z,14Z)-eicosatetraenoate + oxidized [NADPH--hemoprotein reductase] + H2O + H(+). The catalysed reaction is (5Z,8Z,11Z,14Z)-eicosatetraenoate + reduced [NADPH--hemoprotein reductase] + O2 = 19-hydroxy-(5Z,8Z,11Z,14Z)-eicosatetraenoate + oxidized [NADPH--hemoprotein reductase] + H2O + H(+). It carries out the reaction (5Z,8Z,11Z,14Z,17Z)-eicosapentaenoate + reduced [NADPH--hemoprotein reductase] + O2 = 19-hydroxy-(5Z,8Z,11Z,14Z,17Z)-eicosapentaenoate + oxidized [NADPH--hemoprotein reductase] + H2O + H(+). The enzyme catalyses (5Z,8Z,11Z,14Z)-eicosatetraenoate + reduced [NADPH--hemoprotein reductase] + O2 = (8R,9S)-epoxy-(5Z,11Z,14Z)-eicosatrienoate + oxidized [NADPH--hemoprotein reductase] + H2O + H(+). It catalyses the reaction (5Z,8Z,11Z,14Z)-eicosatetraenoate + reduced [NADPH--hemoprotein reductase] + O2 = (11R,12S)-epoxy-(5Z,8Z,14Z)-eicosatrienoate + oxidized [NADPH--hemoprotein reductase] + H2O + H(+). The catalysed reaction is (5Z,8Z,11Z,14Z)-eicosatetraenoate + reduced [NADPH--hemoprotein reductase] + O2 = (14S,15R)-epoxy-(5Z,8Z,11Z)-eicosatrienoate + oxidized [NADPH--hemoprotein reductase] + H2O + H(+). It carries out the reaction (5Z,8Z,11Z,14Z)-eicosatetraenoate + reduced [NADPH--hemoprotein reductase] + O2 = (14R,15S)-epoxy-(5Z,8Z,11Z)-eicosatrienoate + oxidized [NADPH--hemoprotein reductase] + H2O + H(+). The enzyme catalyses (5Z,8Z,11Z,14Z,17Z)-eicosapentaenoate + reduced [NADPH--hemoprotein reductase] + O2 = (17R,18S)-epoxy-(5Z,8Z,11Z,14Z)-eicosatetraenoate + oxidized [NADPH--hemoprotein reductase] + H2O + H(+). It catalyses the reaction (4Z,7Z,10Z,13Z,16Z,19Z)-docosahexaenoate + reduced [NADPH--hemoprotein reductase] + O2 = (19S,20R)-epoxy-(4Z,7Z,10Z,13Z,16Z)-docosapentaenoate + oxidized [NADPH--hemoprotein reductase] + H2O + H(+). The catalysed reaction is (4Z,7Z,10Z,13Z,16Z,19Z)-docosahexaenoate + reduced [NADPH--hemoprotein reductase] + O2 = (19R,20S)-epoxy-(4Z,7Z,10Z,13Z,16Z)-docosapentaenoate + oxidized [NADPH--hemoprotein reductase] + H2O + H(+). It carries out the reaction all-trans-retinol + reduced [NADPH--hemoprotein reductase] + O2 = all-trans-retinal + oxidized [NADPH--hemoprotein reductase] + 2 H2O + H(+). The enzyme catalyses all-trans-retinal + reduced [NADPH--hemoprotein reductase] + O2 = all-trans-retinoate + oxidized [NADPH--hemoprotein reductase] + H2O + 2 H(+). It catalyses the reaction (13S)-hydroperoxy-(9Z,11E)-octadecadienoate = 13-oxo-(9Z,11E)-octadecadienoate + H2O. The catalysed reaction is (12S)-hydroperoxy-(5Z,8Z,10E,14Z)-eicosatetraenoate = 12-oxo-(5Z,8Z,10E,14Z)-eicosatetraenoate + H2O. It carries out the reaction (15S)-hydroperoxy-(5Z,8Z,11Z,13E)-eicosatetraenoate = 15-oxo-(5Z,8Z,11Z,13E)-eicosatetraenoate + H2O. The enzyme catalyses (5S)-hydroperoxy-(6E,8Z,11Z,14Z)-eicosatetraenoate = 5-oxo-(6E,8Z,11Z,14Z)-eicosatetraenoate + H2O. The protein operates within steroid hormone biosynthesis. It functions in the pathway lipid metabolism; fatty acid metabolism. It participates in cofactor metabolism; retinol metabolism. Functionally, a cytochrome P450 monooxygenase involved in the metabolism of various endogenous substrates, including fatty acids, steroid hormones and vitamins. Mechanistically, uses molecular oxygen inserting one oxygen atom into a substrate, and reducing the second into a water molecule, with two electrons provided by NADPH via cytochrome P450 reductase (CPR; NADPH-ferrihemoprotein reductase). Catalyzes the hydroxylation of carbon-hydrogen bonds. Exhibits high catalytic activity for the formation of hydroxyestrogens from estrone (E1) and 17beta-estradiol (E2), namely 2-hydroxy E1 and E2, as well as D-ring hydroxylated E1 and E2 at the C15alpha and C16alpha positions. Displays different regioselectivities for polyunsaturated fatty acids (PUFA) hydroxylation. Catalyzes the epoxidation of double bonds of certain PUFA. Converts arachidonic acid toward epoxyeicosatrienoic acid (EET) regioisomers, 8,9-, 11,12-, and 14,15-EET, that function as lipid mediators in the vascular system. Displays an absolute stereoselectivity in the epoxidation of eicosapentaenoic acid (EPA) producing the 17(R),18(S) enantiomer. May play an important role in all-trans retinoic acid biosynthesis in extrahepatic tissues. Catalyzes two successive oxidative transformation of all-trans retinol to all-trans retinal and then to the active form all-trans retinoic acid. May also participate in eicosanoids metabolism by converting hydroperoxide species into oxo metabolites (lipoxygenase-like reaction, NADPH-independent). The sequence is that of Cytochrome P450 1A1 (CYP1A1) from Felis catus (Cat).